Reading from the N-terminus, the 123-residue chain is Large ribosomal subunit protein bL12 (123 aa).

K84 bears the N6-methyllysine mark. Residues 94-123 (PATLKEGMSKEDGDEAKTKLEEAGASVELK) form a disordered region. The span at 100–115 (GMSKEDGDEAKTKLEE) shows a compositional bias: basic and acidic residues.

This sequence belongs to the bacterial ribosomal protein bL12 family. As to quaternary structure, homodimer. Part of the ribosomal stalk of the 50S ribosomal subunit. Forms a multimeric L10(L12)X complex, where L10 forms an elongated spine to which 2 to 4 L12 dimers bind in a sequential fashion. Binds GTP-bound translation factors.

Its function is as follows. Seems to be the binding site for several of the factors involved in protein synthesis and appears to be essential for accurate translation. Forms part of the ribosomal stalk which helps the ribosome interact with GTP-bound translation factors. Is thus essential for accurate translation. This Halophilic eubacterium NRCC 41227 protein is Large ribosomal subunit protein bL12.